The sequence spans 371 residues: MSFRKVNIIIWVLAVVLFLLVLHHNFLSLSSLLKNDISDSGIVGLQPIDFVASAHQHPVSERQEEIPVVIAASEDRLGGTIAAINSVHQNTRSNVMFYIVTFNSTADHLRSWLNSGSLKSIRYKIVNFDTKLLEGKVKQDPDQGESMKPLTFARFYLPILVPSAKKAIYMDDDVIVQGDILALYNTPLKPGHAAAFSEDCDSASTKVIIRGAGNQYNYIGYLDYKKERIRKLSMKASTCSFNPGVFVANLTEWKRQNVTNQLEKWMKLNVEEGLYSRTLAGSITTPPLLIVFYQQHSTIDPMWNVRHLGSSAGKRYSPQFVKAAKLLHWNGHFKPWGRTASYADVWEKWYIPDPTGKFSLIRRHMDTSNIK.

Residues methionine 1–asparagine 7 are Cytoplasmic-facing. The chain crosses the membrane as a helical; Signal-anchor for type II membrane protein span at residues isoleucine 8–serine 28. Topologically, residues leucine 29–lysine 371 are lumenal. The N-linked (GlcNAc...) asparagine glycan is linked to asparagine 257.

It belongs to the glycosyltransferase 8 family.

It localises to the membrane. The sequence is that of Glycosyltransferase 8 domain-containing protein 1 (Glt8d1) from Mus musculus (Mouse).